A 513-amino-acid chain; its full sequence is ATP synthase subunit alpha (513 aa).

Residue 169–176 participates in ATP binding; the sequence is GDRQTGKT.

This sequence belongs to the ATPase alpha/beta chains family. As to quaternary structure, F-type ATPases have 2 components, CF(1) - the catalytic core - and CF(0) - the membrane proton channel. CF(1) has five subunits: alpha(3), beta(3), gamma(1), delta(1), epsilon(1). CF(0) has three main subunits: a(1), b(2) and c(9-12). The alpha and beta chains form an alternating ring which encloses part of the gamma chain. CF(1) is attached to CF(0) by a central stalk formed by the gamma and epsilon chains, while a peripheral stalk is formed by the delta and b chains.

It localises to the cell inner membrane. The catalysed reaction is ATP + H2O + 4 H(+)(in) = ADP + phosphate + 5 H(+)(out). Produces ATP from ADP in the presence of a proton gradient across the membrane. The alpha chain is a regulatory subunit. This Shewanella sp. (strain MR-4) protein is ATP synthase subunit alpha.